The following is a 144-amino-acid chain: Large ribosomal subunit protein uL13 (144 aa).

The protein belongs to the universal ribosomal protein uL13 family. In terms of assembly, part of the 50S ribosomal subunit.

Its function is as follows. This protein is one of the early assembly proteins of the 50S ribosomal subunit, although it is not seen to bind rRNA by itself. It is important during the early stages of 50S assembly. The chain is Large ribosomal subunit protein uL13 from Heliobacterium modesticaldum (strain ATCC 51547 / Ice1).